A 140-amino-acid polypeptide reads, in one-letter code: NADH-quinone oxidoreductase subunit I (140 aa).

2 consecutive 4Fe-4S ferredoxin-type domains span residues 42–71 (GSFT…VGSI) and 81–110 (ASYE…FNQE). [4Fe-4S] cluster is bound by residues Cys-51, Cys-54, Cys-57, Cys-61, Cys-90, Cys-93, Cys-96, and Cys-100.

This sequence belongs to the complex I 23 kDa subunit family. NDH-1 is composed of 14 different subunits. Subunits NuoA, H, J, K, L, M, N constitute the membrane sector of the complex. [4Fe-4S] cluster serves as cofactor.

The protein resides in the cell membrane. The catalysed reaction is a quinone + NADH + 5 H(+)(in) = a quinol + NAD(+) + 4 H(+)(out). NDH-1 shuttles electrons from NADH, via FMN and iron-sulfur (Fe-S) centers, to quinones in the respiratory chain. The immediate electron acceptor for the enzyme in this species is believed to be ubiquinone. Couples the redox reaction to proton translocation (for every two electrons transferred, four hydrogen ions are translocated across the cytoplasmic membrane), and thus conserves the redox energy in a proton gradient. This is NADH-quinone oxidoreductase subunit I from Carboxydothermus hydrogenoformans (strain ATCC BAA-161 / DSM 6008 / Z-2901).